The chain runs to 207 residues: Large ribosomal subunit protein uL4 (207 aa).

The disordered stretch occupies residues Lys-48–Gly-70.

Belongs to the universal ribosomal protein uL4 family. Part of the 50S ribosomal subunit.

Its function is as follows. One of the primary rRNA binding proteins, this protein initially binds near the 5'-end of the 23S rRNA. It is important during the early stages of 50S assembly. It makes multiple contacts with different domains of the 23S rRNA in the assembled 50S subunit and ribosome. Functionally, forms part of the polypeptide exit tunnel. The protein is Large ribosomal subunit protein uL4 of Francisella tularensis subsp. holarctica (strain FTNF002-00 / FTA).